The chain runs to 224 residues: Lipoprotein-releasing system ATP-binding protein LolD (224 aa).

Residues 6–224 (LEFCNVSKFF…IVNHSLISSI (219 aa)) enclose the ABC transporter domain. ATP is bound at residue 43–50 (GASGVGKT).

This sequence belongs to the ABC transporter superfamily. Lipoprotein translocase (TC 3.A.1.125) family. In terms of assembly, the complex is composed of two ATP-binding proteins (LolD) and two transmembrane proteins (LolC and LolE).

The protein resides in the cell inner membrane. Its function is as follows. Part of the ABC transporter complex LolCDE involved in the translocation of mature outer membrane-directed lipoproteins, from the inner membrane to the periplasmic chaperone, LolA. Responsible for the formation of the LolA-lipoprotein complex in an ATP-dependent manner. The polypeptide is Lipoprotein-releasing system ATP-binding protein LolD (Neorickettsia sennetsu (strain ATCC VR-367 / Miyayama) (Ehrlichia sennetsu)).